We begin with the raw amino-acid sequence, 153 residues long: Probable inactive ribonuclease-like protein 13 (153 aa).

Positions 1 to 22 (MASDAASLLVLQLVLQPTLVTG) are cleaved as a signal peptide.

It belongs to the pancreatic ribonuclease family.

It localises to the secreted. Does not exhibit any ribonuclease activity. The sequence is that of Probable inactive ribonuclease-like protein 13 (Rnase13) from Rattus norvegicus (Rat).